The sequence spans 133 residues: Large ribosomal subunit protein bL17 (133 aa).

It belongs to the bacterial ribosomal protein bL17 family. Part of the 50S ribosomal subunit. Contacts protein L32.

The chain is Large ribosomal subunit protein bL17 from Alteromonas mediterranea (strain DSM 17117 / CIP 110805 / LMG 28347 / Deep ecotype).